The chain runs to 89 residues: Exodeoxyribonuclease 7 small subunit (89 aa).

It belongs to the XseB family. Heterooligomer composed of large and small subunits.

It is found in the cytoplasm. The catalysed reaction is Exonucleolytic cleavage in either 5'- to 3'- or 3'- to 5'-direction to yield nucleoside 5'-phosphates.. Bidirectionally degrades single-stranded DNA into large acid-insoluble oligonucleotides, which are then degraded further into small acid-soluble oligonucleotides. In Chlorobium phaeobacteroides (strain DSM 266 / SMG 266 / 2430), this protein is Exodeoxyribonuclease 7 small subunit.